Here is a 246-residue protein sequence, read N- to C-terminus: Probable transcriptional regulatory protein ESA_01378 (246 aa).

This sequence belongs to the TACO1 family.

Its subcellular location is the cytoplasm. The polypeptide is Probable transcriptional regulatory protein ESA_01378 (Cronobacter sakazakii (strain ATCC BAA-894) (Enterobacter sakazakii)).